The chain runs to 31 residues: Cytochrome b6-f complex subunit 6 (31 aa).

The chain crosses the membrane as a helical span at residues isoleucine 4–glycine 24.

The protein belongs to the PetL family. The 4 large subunits of the cytochrome b6-f complex are cytochrome b6, subunit IV (17 kDa polypeptide, PetD), cytochrome f and the Rieske protein, while the 4 small subunits are PetG, PetL, PetM and PetN. The complex functions as a dimer.

The protein resides in the plastid. Its subcellular location is the chloroplast thylakoid membrane. Functionally, component of the cytochrome b6-f complex, which mediates electron transfer between photosystem II (PSII) and photosystem I (PSI), cyclic electron flow around PSI, and state transitions. PetL is important for photoautotrophic growth as well as for electron transfer efficiency and stability of the cytochrome b6-f complex. This Humulus lupulus (European hop) protein is Cytochrome b6-f complex subunit 6.